The chain runs to 393 residues: Beta-1,4-galactosyltransferase 3 (393 aa).

The Cytoplasmic portion of the chain corresponds to 1-10 (MLRRLLERPC). Residues 11 to 31 (TLALLVGSQLAVMMYLSLGGF) form a helical; Signal-anchor for type II membrane protein membrane-spanning segment. Topologically, residues 32–393 (RSLSALFGRD…ANHTALRGSH (362 aa)) are lumenal. Residue asparagine 57 is glycosylated (N-linked (GlcNAc...) asparagine). Cysteine 77 and cysteine 119 form a disulfide bridge. 130 to 134 (PHRAR) serves as a coordination point for UDP-alpha-D-galactose. An N-linked (GlcNAc...) asparagine glycan is attached at asparagine 166. UDP-alpha-D-galactose contacts are provided by residues 169 to 171 (FNR), 196 to 197 (VD), tyrosine 226, and tryptophan 258. Cysteine 190 and cysteine 209 are joined by a disulfide. Position 197 (aspartate 197) interacts with Mn(2+). An N-acetyl-D-glucosamine-binding site is contributed by 260–263 (GEDD). Histidine 291 is a Mn(2+) binding site. A UDP-alpha-D-galactose-binding site is contributed by 291–293 (HRG). Arginine 303 contributes to the N-acetyl-D-glucosamine binding site. N-linked (GlcNAc...) asparagine glycans are attached at residues asparagine 337 and asparagine 385. A disordered region spans residues 339–393 (TADIGTDPRGPRAPSGPRYPPGSSQAFRQEMLQRRPPARPGPLSTANHTALRGSH).

It belongs to the glycosyltransferase 7 family. Requires Mn(2+) as cofactor. In terms of tissue distribution, found in various tissues. Highest expression in placenta, prostate, testis, ovary, intestine and muscle, and in fetal brain.

Its subcellular location is the golgi apparatus. It localises to the golgi stack membrane. The enzyme catalyses an N-acetyl-beta-D-glucosaminyl derivative + UDP-alpha-D-galactose = a beta-D-galactosyl-(1-&gt;4)-N-acetyl-beta-D-glucosaminyl derivative + UDP + H(+). The catalysed reaction is N-acetyl-D-glucosamine + UDP-alpha-D-galactose = beta-D-galactosyl-(1-&gt;4)-N-acetyl-D-glucosamine + UDP + H(+). It carries out the reaction a beta-D-GlcNAc-(1-&gt;3)-beta-D-Gal-(1-&gt;4)-beta-D-Glc-(1&lt;-&gt;1)-Cer(d18:1(4E)) + UDP-alpha-D-galactose = a neolactoside nLc4Cer(d18:1(4E)) + UDP + H(+). It catalyses the reaction a beta-D-glucosylceramide + UDP-alpha-D-galactose = a beta-D-galactosyl-(1-&gt;4)-beta-D-glucosyl-(1&lt;-&gt;1)-ceramide + UDP + H(+). The enzyme catalyses a neolactoside IV(3)-beta-GlcNAc-nLc4Cer + UDP-alpha-D-galactose = a neolactoside nLc6Cer + UDP + H(+). It functions in the pathway protein modification; protein glycosylation. Responsible for the synthesis of complex-type N-linked oligosaccharides in many glycoproteins as well as the carbohydrate moieties of glycolipids. This is Beta-1,4-galactosyltransferase 3 from Homo sapiens (Human).